The primary structure comprises 323 residues: tRNA dimethylallyltransferase (323 aa).

ATP is bound at residue 12-19 (GPTAAGKT). Residue 14–19 (TAAGKT) participates in substrate binding. Interaction with substrate tRNA regions lie at residues 37–40 (DSAL) and 161–165 (QRLIR).

Belongs to the IPP transferase family. As to quaternary structure, monomer. It depends on Mg(2+) as a cofactor.

The catalysed reaction is adenosine(37) in tRNA + dimethylallyl diphosphate = N(6)-dimethylallyladenosine(37) in tRNA + diphosphate. Functionally, catalyzes the transfer of a dimethylallyl group onto the adenine at position 37 in tRNAs that read codons beginning with uridine, leading to the formation of N6-(dimethylallyl)adenosine (i(6)A). In Pseudomonas entomophila (strain L48), this protein is tRNA dimethylallyltransferase.